A 149-amino-acid polypeptide reads, in one-letter code: 3-hydroxyacyl-[acyl-carrier-protein] dehydratase FabZ (149 aa).

Residue H47 is part of the active site.

The protein belongs to the thioester dehydratase family. FabZ subfamily.

It localises to the cytoplasm. The catalysed reaction is a (3R)-hydroxyacyl-[ACP] = a (2E)-enoyl-[ACP] + H2O. In terms of biological role, involved in unsaturated fatty acids biosynthesis. Catalyzes the dehydration of short chain beta-hydroxyacyl-ACPs and long chain saturated and unsaturated beta-hydroxyacyl-ACPs. The sequence is that of 3-hydroxyacyl-[acyl-carrier-protein] dehydratase FabZ from Thioalkalivibrio sulfidiphilus (strain HL-EbGR7).